The primary structure comprises 167 residues: MMFTYVVAVASVVALTSAYPTGAPPSACFDMIPGHAADVQTVPAPYTITTAVSSVKAGHSIDVVISGKTPEDKMAGILLEARQGDKIVGTWTVSPDDTFSQPLNCGEPNNAVTHKMHAKELDRQTVSYPWTAPKDLEGDVVFKVTIVKSYAVFWVGIESAPVKVLSH.

Positions 1 to 18 are cleaved as a signal peptide; sequence MMFTYVVAVASVVALTSA. Residues 19–167 enclose the Reelin domain; it reads YPTGAPPSAC…ESAPVKVLSH (149 aa). An intrachain disulfide couples Cys28 to Cys105.

It belongs to the insect defense protein family. As to expression, in larvae, high expression in the fat body and low expression in midgut, hemocytes and malpighian tubules. No expression in silkgland.

Its subcellular location is the secreted. May have antimicrobial activity. This chain is Putative defense protein Hdd11-like, found in Samia ricini (Indian eri silkmoth).